Consider the following 171-residue polypeptide: Crossover junction endodeoxyribonuclease RuvC (171 aa).

Residues aspartate 7, glutamate 66, and aspartate 138 contribute to the active site. Mg(2+) contacts are provided by aspartate 7, glutamate 66, and aspartate 138.

The protein belongs to the RuvC family. As to quaternary structure, homodimer which binds Holliday junction (HJ) DNA. The HJ becomes 2-fold symmetrical on binding to RuvC with unstacked arms; it has a different conformation from HJ DNA in complex with RuvA. In the full resolvosome a probable DNA-RuvA(4)-RuvB(12)-RuvC(2) complex forms which resolves the HJ. Requires Mg(2+) as cofactor.

The protein localises to the cytoplasm. It catalyses the reaction Endonucleolytic cleavage at a junction such as a reciprocal single-stranded crossover between two homologous DNA duplexes (Holliday junction).. The RuvA-RuvB-RuvC complex processes Holliday junction (HJ) DNA during genetic recombination and DNA repair. Endonuclease that resolves HJ intermediates. Cleaves cruciform DNA by making single-stranded nicks across the HJ at symmetrical positions within the homologous arms, yielding a 5'-phosphate and a 3'-hydroxyl group; requires a central core of homology in the junction. The consensus cleavage sequence is 5'-(A/T)TT(C/G)-3'. Cleavage occurs on the 3'-side of the TT dinucleotide at the point of strand exchange. HJ branch migration catalyzed by RuvA-RuvB allows RuvC to scan DNA until it finds its consensus sequence, where it cleaves and resolves the cruciform DNA. This chain is Crossover junction endodeoxyribonuclease RuvC, found in Thiobacillus denitrificans (strain ATCC 25259 / T1).